Here is a 75-residue protein sequence, read N- to C-terminus: Cytochrome c oxidase assembly factor 5 (75 aa).

One can recognise a CHCH domain in the interval 28–66; the sequence is QHDCVVKEGKKPSECLKEGHCRSMQVAFFECKRSMLDTR. The short motif at 31–42 is the Cx10C motif element; that stretch reads CVVKEGKKPSEC. Disulfide bonds link cysteine 31/cysteine 58 and cysteine 42/cysteine 48. The short motif at 48-58 is the Cx9C motif element; that stretch reads CRSMQVAFFEC.

The protein belongs to the PET191 family.

Functionally, involved in an early step of the mitochondrial complex IV assembly process. In Danio rerio (Zebrafish), this protein is Cytochrome c oxidase assembly factor 5 (coa5).